A 961-amino-acid polypeptide reads, in one-letter code: Ubiquitin carboxyl-terminal hydrolase 4 (961 aa).

Residues 11–122 (PDVETQKTEL…GQQPIVRKVV (112 aa)) enclose the DUSP domain. Residues 27-216 (TLQRGAQWYL…LYQGQVLVIE (190 aa)) form a necessary for interaction with SART3 region. Positions 133-141 (VEVYLLELK) match the Nuclear export signal motif. Residues 142–226 (LCENSDPTNV…PQNEDGTWPR (85 aa)) form the Ubiquitin-like 1 domain. The interval 219-257 (NEDGTWPRQTLQSKSSTAPSRNFTTSSKPSASPYSSMSA) is disordered. Residues 225-243 (PRQTLQSKSSTAPSRNFTT) show a composition bias toward polar residues. Residues 229-295 (LQSKSSTAPS…SYNCQEPPSP (67 aa)) are required for USP4 activation by providing conformational flexibility between the DUSP and catalytic domains. Residues 244–257 (SSKPSASPYSSMSA) are compositionally biased toward low complexity. Positions 302–921 (CGLGNLGNTC…AAYVLFYQRR (620 aa)) constitute a USP domain. C311 is an active-site residue. The tract at residues 384–386 (PQF) is regulates ubiquitin dissociation. A necessary for interaction with RBL2 region spans residues 405–407 (LHE). Phosphoserine is present on S445. Residues 459–463 (LVCPE) form a necessary for interaction with RB1 and RBL2 region. The Zn(2+) site is built by C461 and C464. Positions 483-571 (LKKDRIMEVF…IFVYEICTTP (89 aa)) constitute a Ubiquitin-like 2 domain. The segment at 485–773 (KDRIMEVFLV…SQPQKKKKAA (289 aa)) is interacts with DUSP and ubiquitin-like 1 domains and is required for USP4 activation. Positions 641–700 (SSPLEPGACNGSRGSYEGDEEEMDHQEEGKEQLSEVEESGEDSQGGDPTETTQKAKGPPR) are disordered. 3 positions are modified to phosphoserine: S655, S674, and S679. A Nuclear localization signal motif is present at residues 765-770 (QPQKKK). The Zn(2+) site is built by C797 and C800. The active site involves H879. Residues 924 to 961 (ECPSTSSPVSFPGSDGGAKLSSSQQDLGEEEAYTMDTN) form a disordered region. Residues 950-961 (LGEEEAYTMDTN) show a composition bias toward acidic residues.

Belongs to the peptidase C19 family. USP4 subfamily. In terms of assembly, interacts with RB1 (both dephosphorylated and hypophosphorylated forms). Interacts with RBL1 and RBL2. Interacts with ADORA2A (via cytoplasmic C-terminus); the interaction is direct. Interacts with SART3; recruits USP4 to its substrate PRPF3. Phosphorylated at Ser-445 by PKB/AKT1 in response to EGF stimulus, promoting its ability deubiquitinate RHEB. In terms of processing, monoubiquitinated by TRIM21. Ubiquitination does not lead to its proteasomal degradation. Autodeubiquitinated. As to expression, expressed in hippocampus and striatum (at protein level).

It is found in the cytoplasm. It localises to the nucleus. It carries out the reaction Thiol-dependent hydrolysis of ester, thioester, amide, peptide and isopeptide bonds formed by the C-terminal Gly of ubiquitin (a 76-residue protein attached to proteins as an intracellular targeting signal).. Its activity is regulated as follows. The completion of the deubiquitinase reaction is mediated by the DUSP and ubiquitin-like 1 domains which promotes the release of ubiquitin from the catalytic site enabling subsequent reactions to occur. Deubiquitinating enzyme that removes conjugated ubiquitin from target proteins. Deubiquitinates PDPK1. Deubiquitinates TRIM21. Deubiquitinates receptor ADORA2A which increases the amount of functional receptor at the cell surface. Deubiquitinates HAS2. Deubiquitinates RHEB in response to EGF signaling, promoting mTORC1 signaling. May regulate mRNA splicing through deubiquitination of the U4 spliceosomal protein PRPF3. This may prevent its recognition by the U5 component PRPF8 thereby destabilizing interactions within the U4/U6.U5 snRNP. May also play a role in the regulation of quality control in the ER. This is Ubiquitin carboxyl-terminal hydrolase 4 (Usp4) from Rattus norvegicus (Rat).